The following is a 216-amino-acid chain: Large ribosomal subunit protein uL1 (216 aa).

This sequence belongs to the universal ribosomal protein uL1 family. Component of the large ribosomal subunit.

Its subcellular location is the cytoplasm. In terms of biological role, component of the large ribosomal subunit. The ribosome is a large ribonucleoprotein complex responsible for the synthesis of proteins in the cell. This chain is Large ribosomal subunit protein uL1 (rpl10a), found in Danio rerio (Zebrafish).